The following is a 250-amino-acid chain: Anamorsin homolog 2 (250 aa).

Residues 1-102 form an N-terminal SAM-like domain region; that stretch reads MNLKITINQQ…QTKKINIPQQ (102 aa). The tract at residues 102–149 is linker; that stretch reads QDFNNCYGKYDYIEQKFQNQINFFKQVDLKGNQETIDENELLNDGVEV. 4 residues coordinate [2Fe-2S] cluster: Cys-155, Cys-162, Cys-165, and Cys-167. Residues 155–167 form a fe-S binding site A region; that stretch reads CASKPRACANCTC. [4Fe-4S] cluster-binding residues include Cys-193, Cys-196, Cys-204, and Cys-207. 2 consecutive short sequence motifs (cx2C motif) follow at residues 193–196 and 204–207; these read CGSC and CANC. Positions 193 to 207 are fe-S binding site B; it reads CGSCYLGDAFRCANC.

The protein belongs to the anamorsin family. As to quaternary structure, monomer. The cofactor is [2Fe-2S] cluster. Requires [4Fe-4S] cluster as cofactor.

It is found in the cytoplasm. The protein localises to the mitochondrion intermembrane space. Its function is as follows. Component of the cytosolic iron-sulfur (Fe-S) protein assembly (CIA) machinery. Required for the maturation of extramitochondrial Fe-S proteins. Part of an electron transfer chain functioning in an early step of cytosolic Fe-S biogenesis, facilitating the de novo assembly of a [4Fe-4S] cluster on the cytosolic Fe-S scaffold complex. Electrons are transferred from NADPH via a FAD- and FMN-containing diflavin oxidoreductase. Together with the diflavin oxidoreductase, also required for the assembly of the diferric tyrosyl radical cofactor of ribonucleotide reductase (RNR), probably by providing electrons for reduction during radical cofactor maturation in the catalytic small subunit. The polypeptide is Anamorsin homolog 2 (Paramecium tetraurelia).